We begin with the raw amino-acid sequence, 95 residues long: Cerebratulus toxin A-III (95 aa).

3 disulfide bridges follow: Cys17-Cys38, Cys23-Cys34, and Cys48-Cys61.

This sequence belongs to the worm cytolysin family.

It is found in the secreted. Its function is as follows. Permeabilizes a variety of cells. Forms large pores which allows the release of large proteins almost as rapidly as small organic molecules and inorganic ions. At sublytic concentrations, the toxin also inhibits protein kinase C and endogenous voltage-gated cation selective (sodium, calcium) channels occurring in the nervous and cardiovascular systems. This chain is Cerebratulus toxin A-III, found in Cerebratulus lacteus (Milky ribbon worm).